We begin with the raw amino-acid sequence, 2829 residues long: Adenomatous polyposis coli homolog (2829 aa).

A coiled-coil region spans residues 4 to 58 (ASYDQLVKQVEALTMENTNLRQELEDNSNHLTKLETEATNMKEVLKQLQGSIEDE). Disordered stretches follow at residues 80-114 (SNIP…SPVP) and 240-300 (AEAA…NSTY). A coiled-coil region spans residues 133–244 (YMEELEKERL…LQSQVAEAAE (112 aa)). Basic and acidic residues predominate over residues 242–262 (AAERTPQSKHDAGSRDAEKLP). Over residues 291–300 (TSVMSSNSTY) the composition is skewed to polar residues. ARM repeat units lie at residues 343–384 (QDSC…ARAS), 462–504 (EEHR…RYAG), 516–555 (ANKA…NLSW), 559–599 (VNSK…NLSA), 603–646 (ENKA…NVSS), 652–691 (EDHR…NLSA), and 694–733 (AKDQ…NLMA). The segment covering 833–842 (TVLPGSSSPR) has biased composition (polar residues). Disordered regions lie at residues 833-877 (TVLP…SKRI), 901-941 (QENR…TKAE), 963-988 (SLNS…SYSE), 1032-1260 (SDEQ…PSIN), 1278-1382 (RGSS…PEHY), 1424-1469 (IISP…EERG), 1533-1612 (LEND…RKPS), 1657-1718 (TSLS…EDKA), 1754-1842 (SAAT…SPHH), 1875-1950 (KAEL…KMEN), 1963-2012 (NSSL…FHVE), 2041-2069 (SSAM…GGIL), 2154-2627 (EEKT…TIAE), and 2686-2829 (KEEA…VTSV). The segment covering 848–857 (SRPEKDRERT) has biased composition (basic and acidic residues). Polar residues-rich tracts occupy residues 863-877 (YHST…SKRI) and 923-941 (RKPS…TKAE). Polar residues predominate over residues 1034–1047 (EQLNSGRQSPTQNE). The span at 1048-1067 (RWSRPKHIIDSEMKQSEQRQ) shows a compositional bias: basic and acidic residues. Composition is skewed to polar residues over residues 1068–1079 (PRTTKTTYSSYT) and 1106–1117 (RGANNQVDQSRV). Positions 1150 to 1159 (SEEEQQEDET) are enriched in acidic residues. The segment covering 1171-1188 (ASEEHHGEQPIDYSRKYS) has biased composition (basic and acidic residues). Residues 1190–1208 (DVPSSAQKPSFPYSNNSSK) show a composition bias toward polar residues. Residues 1217 to 1230 (SSNSNTPTPSPNSN) are compositionally biased toward low complexity. 3 stretches are compositionally biased toward polar residues: residues 1231–1244 (RQNQ…QSRP), 1301–1310 (GQESNNTLQI), and 1340–1351 (NRLQTSNISPSD). Residues 1361 to 1372 (SSGAKSPSKSGA) are compositionally biased toward low complexity. Basic and acidic residues-rich tracts occupy residues 1454-1469 (AKKD…EERG) and 1537-1566 (QGNK…KDML). Residues 1545–1578 (KEFIDNKAKKEDKRSEQEKDMLDDTDDDIDILEE) are a coiled coil. The span at 1567–1577 (DDTDDDIDILE) shows a compositional bias: acidic residues. Over residues 1597-1608 (QPTPGKPPPPVA) the composition is skewed to pro residues. The span at 1671–1683 (PTNDQPNTDSLST) shows a compositional bias: polar residues. Over residues 1684–1703 (DLEKRDTIPTEGRSTDDTDA) the composition is skewed to basic and acidic residues. The segment covering 1754-1765 (SAATSSGNSRSM) has biased composition (polar residues). Composition is skewed to basic and acidic residues over residues 1786–1795 (FKERLKKNTE) and 1875–1898 (KAEL…HENR). 2 stretches are compositionally biased toward polar residues: residues 1926 to 1935 (KPTSFSSAAK) and 1984 to 2003 (LKQT…QTSG). Over residues 2168 to 2186 (KPAEKSALENKKTEEEPKG) the composition is skewed to basic and acidic residues. The segment covering 2199-2222 (TGKSRSSSDFSSHCKQSVQTNMPS) has biased composition (polar residues). Low complexity-rich tracts occupy residues 2256–2275 (PSKG…GTKP), 2283–2322 (GSRP…LQSP), and 2346–2359 (TTSP…SSGS). Polar residues-rich tracts occupy residues 2360-2408 (GRMS…TGSN) and 2415-2424 (RMSSTKSSGS). The segment covering 2456–2474 (SASFESLSSSSRADSPPRS) has biased composition (low complexity). The span at 2549-2562 (SSSLPRVSTWRRTG) shows a compositional bias: polar residues. Residues 2563–2573 (SSSSILSASSE) show a composition bias toward low complexity. Residues 2574–2585 (SSEKAKSEDEKQ) show a composition bias toward basic and acidic residues. The segment covering 2616 to 2627 (TPSNGSSSTIAE) has biased composition (polar residues). Basic and acidic residues predominate over residues 2686 to 2695 (KEEAAKDCHT). The span at 2730–2743 (LINNQQETNENTVA) shows a compositional bias: polar residues. Low complexity predominate over residues 2749 to 2760 (SSSSSSKHSSPS). A compositionally biased stretch (polar residues) spans 2770–2798 (FNYNPSPRKSNGENSTSRPSQIPTPVTNS).

Belongs to the adenomatous polyposis coli (APC) family.

Its function is as follows. Promotes rapid degradation of CTNNB1 and participates in Wnt signaling as a negative regulator. This Xenopus laevis (African clawed frog) protein is Adenomatous polyposis coli homolog (apc).